Consider the following 309-residue polypeptide: tRNA dimethylallyltransferase (309 aa).

An ATP-binding site is contributed by 9-16 (GPTAVGKT). 11 to 16 (TAVGKT) contributes to the substrate binding site. The interaction with substrate tRNA stretch occupies residues 34-37 (DSMQ).

Belongs to the IPP transferase family. As to quaternary structure, monomer. It depends on Mg(2+) as a cofactor.

It catalyses the reaction adenosine(37) in tRNA + dimethylallyl diphosphate = N(6)-dimethylallyladenosine(37) in tRNA + diphosphate. Functionally, catalyzes the transfer of a dimethylallyl group onto the adenine at position 37 in tRNAs that read codons beginning with uridine, leading to the formation of N6-(dimethylallyl)adenosine (i(6)A). The sequence is that of tRNA dimethylallyltransferase from Clostridium acetobutylicum (strain ATCC 824 / DSM 792 / JCM 1419 / IAM 19013 / LMG 5710 / NBRC 13948 / NRRL B-527 / VKM B-1787 / 2291 / W).